The primary structure comprises 298 residues: Putative olfactory receptor 10D4 (298 aa).

Topologically, residues 1–23 (MRNHTMVTEFILLGIPETEGLET) are extracellular. N-linked (GlcNAc...) asparagine glycosylation occurs at Asn-3. A helical membrane pass occupies residues 24 to 44 (ALLFLFSSFYLCTLLGNVLIL). At 45–52 (TAIISSTR) the chain is on the cytoplasmic side. Residues 53–73 (LHTPMYFFLGNLSIFDLGFSS) form a helical membrane-spanning segment. At 74–97 (TTVPKMLFYLSGNSHAISYAGCVS) the chain is on the extracellular side. Residues Cys-95 and Cys-187 are joined by a disulfide bond. The chain crosses the membrane as a helical span at residues 98–118 (QLFFYHFLGCTECFLYTVMAC). Topologically, residues 119-137 (DRFVAICFPLRYTVIMNHR) are cytoplasmic. The helical transmembrane segment at 138–158 (VCFMLATGTWMIGCVHAMILT) threads the bilayer. The Extracellular segment spans residues 159–195 (PLTFQLPYCGPNKVGYYFCDIPAVLPLACKDTSLAQR). A helical membrane pass occupies residues 196–215 (VGFTNVGLLSLICFFLILVS). Residues 216–235 (YTCIGISISKIRSAEGRQRA) are Cytoplasmic-facing. A helical transmembrane segment spans residues 236–256 (FSTCSAHLTAILCAYGPVIVI). Residues 257 to 267 (YLQPNPSALLG) are Extracellular-facing. Residues 268–288 (SIIQILNNLVTPMLNPLIYSL) form a helical membrane-spanning segment. Topologically, residues 289–298 (RNKDVKSDQP) are cytoplasmic.

The protein belongs to the G-protein coupled receptor 1 family.

Its subcellular location is the cell membrane. Functionally, odorant receptor. The polypeptide is Putative olfactory receptor 10D4 (OR10D4P) (Homo sapiens (Human)).